We begin with the raw amino-acid sequence, 294 residues long: Nucleotide-binding protein CLK_2809 (294 aa).

Gly8–Thr15 contacts ATP. GTP is bound at residue Asp59–Gly62.

This sequence belongs to the RapZ-like family.

Functionally, displays ATPase and GTPase activities. This is Nucleotide-binding protein CLK_2809 from Clostridium botulinum (strain Loch Maree / Type A3).